We begin with the raw amino-acid sequence, 1596 residues long: Protein son of sevenless (1596 aa).

The DH domain maps to Thr-248–Val-434. In terms of domain architecture, PH spans Glu-480 to Thr-588. One can recognise an N-terminal Ras-GEF domain in the interval Gly-637 to Asn-792. One can recognise a Ras-GEF domain in the interval His-829 to Arg-1066. Disordered regions lie at residues Lys-1073 to Ser-1105, Arg-1175 to Trp-1212, Glu-1235 to Thr-1291, Arg-1340 to Thr-1392, and Pro-1465 to Glu-1596. A compositionally biased stretch (low complexity) spans Thr-1096–Ser-1105. 2 stretches are compositionally biased toward polar residues: residues Arg-1175 to Glu-1195 and Met-1280 to Thr-1291. Residues Glu-1352–Ala-1366 are compositionally biased toward basic and acidic residues. A compositionally biased stretch (low complexity) spans Ser-1469–Ser-1489. Residues His-1526–His-1542 are compositionally biased toward basic residues. Ser-1550 and Ser-1551 each carry phosphoserine.

As to quaternary structure, may form a complex with sevenless and DRK.

Its function is as follows. Promotes the exchange of Ras-bound GDP by GTP. Functions in signaling pathways initiated by the sevenless and epidermal growth factor receptor tyrosine kinases; implies a role for the ras pathway in neuronal development. In Drosophila melanogaster (Fruit fly), this protein is Protein son of sevenless (Sos).